Here is a 170-residue protein sequence, read N- to C-terminus: Large ribosomal subunit protein uL16 (170 aa).

It belongs to the universal ribosomal protein uL16 family.

This Methanospirillum hungatei JF-1 (strain ATCC 27890 / DSM 864 / NBRC 100397 / JF-1) protein is Large ribosomal subunit protein uL16.